The primary structure comprises 206 residues: Large ribosomal subunit protein eL13z (206 aa).

A disordered region spans residues 185–206; the sequence is TNKRHAGARAKRAAEAEKEEKK. Residues 186 to 195 are compositionally biased toward basic residues; the sequence is NKRHAGARAK. A compositionally biased stretch (basic and acidic residues) spans 196–206; that stretch reads RAAEAEKEEKK.

This sequence belongs to the eukaryotic ribosomal protein eL13 family.

The protein resides in the cytoplasm. The polypeptide is Large ribosomal subunit protein eL13z (RPL13B) (Arabidopsis thaliana (Mouse-ear cress)).